We begin with the raw amino-acid sequence, 343 residues long: Heat-inducible transcription repressor HrcA (343 aa).

Belongs to the HrcA family.

Functionally, negative regulator of class I heat shock genes (grpE-dnaK-dnaJ and groELS operons). Prevents heat-shock induction of these operons. The chain is Heat-inducible transcription repressor HrcA from Mycobacterium marinum (strain ATCC BAA-535 / M).